We begin with the raw amino-acid sequence, 135 residues long: Putative hydrolase EbsB (135 aa).

The RNase H type-1 domain occupies 1–128 (MLRIYVDAAT…ADMLARQALQ (128 aa)). 4 residues coordinate Mg(2+): aspartate 7, glutamate 45, aspartate 71, and aspartate 120.

This sequence belongs to the RNase H family. EbsB subfamily. Mg(2+) is required as a cofactor.

It localises to the secreted. The protein localises to the cell wall. In terms of biological role, seems to play some role in the cell surface expression of a chromosomally encoded receptor, named enterococcal binding substance (EBS), that mediates mating aggregate formation. Might interfere with the synthesis or assembly of EBS and function as a cell wall hydrolase. The sequence is that of Putative hydrolase EbsB from Enterococcus faecalis (strain ATCC 700802 / V583).